Consider the following 724-residue polypeptide: NAD(+) hydrolase SARM1 (724 aa).

Residues 1 to 27 (MVLTLLLSAYKLCRFFAMSGPRPGAER) constitute a mitochondrion transit peptide. The stretch at 60-100 (EVQDALERALPELQQALSALKQAGGARAVGAGLAEVFQLVE) is one ARM 1 repeat. NAD(+)-binding positions include Trp-103, Arg-110, 149–157 (EQILVAENR), and 190–193 (HMFK). 7 ARM repeats span residues 114–153 (QGLC…QILV), 155–193 (ENRD…HMFK), 196–235 (EETC…NCAL), 237–280 (GGQA…LATN), 281–314 (KEVE…CLVD), 315–354 (ASDT…AEAA), and 359–402 (QGKT…EEVP). SAM domains follow at residues 412 to 476 (WKEA…LKTF) and 486 to 548 (NLAD…MLHS). Residues Ser-548 and Ser-558 each carry the phosphoserine modification. The TIR domain occupies 560 to 703 (DTPDVFISYR…KIIRFLQGRS (144 aa)). Residues 569–570 (RR) and Glu-599 each bind NAD(+). Glu-642 is an active-site residue. Residues 704–724 (SRDSSAGSDTSLEGAAPMGPT) form a disordered region.

The protein belongs to the SARM1 family. Homooctamer; forms an octameric ring via SAM domains. Interacts with TICAM1/TRIF and thereby interferes with TICAM1/TRIF function. Interacts with MAPK10/JNK3 and SDC2 (via cytoplasmic domain). Phosphorylation at Ser-548 by JNK kinases (MAPK8, MAPK9 and /or MAPK10) enhance the NAD(+) hydrolase (NADase) activity. Phosphorylation at Ser-548 and subsequent activation takes place in response to oxidative stress conditions and inhibits mitochondrial respiration. Predominantly expressed in brain, kidney and liver. Expressed at lower level in placenta.

It localises to the cytoplasm. It is found in the cell projection. Its subcellular location is the axon. The protein resides in the dendrite. The protein localises to the synapse. It localises to the mitochondrion. It carries out the reaction NAD(+) + H2O = ADP-D-ribose + nicotinamide + H(+). It catalyses the reaction NAD(+) = cyclic ADP-beta-D-ribose + nicotinamide + H(+). The catalysed reaction is NADP(+) + H2O = ADP-D-ribose 2'-phosphate + nicotinamide + H(+). Its activity is regulated as follows. Autoinhibited: in the inactive state, the enzymatic TIR domain is held apart by the autoinhibiting ARM repeats. NAD(+)-binding to ARM repeats maintains an inactive state by promoting interaction between ARM repeats and the TIR domain, thereby facilitating inhibition of the enzymatic TIR domain. Following activation, possibly by nicotinamide mononucleotide (NMN), auto-inhibitory interactions are released, allowing self-association of the TIR domains and subsequent activation of the NAD(+) hydrolase (NADase) activity. Self-association of TIR domains is facilitated by the octamer of SAM domains. NAD(+) hydrolase activity is inhibited by nicotinamide. Specifically inhibited by berberine chloride and zinc chloride. In terms of biological role, NAD(+) hydrolase, which plays a key role in axonal degeneration following injury by regulating NAD(+) metabolism. Acts as a negative regulator of MYD88- and TRIF-dependent toll-like receptor signaling pathway by promoting Wallerian degeneration, an injury-induced form of programmed subcellular death which involves degeneration of an axon distal to the injury site. Wallerian degeneration is triggered by NAD(+) depletion: in response to injury, SARM1 is activated and catalyzes cleavage of NAD(+) into ADP-D-ribose (ADPR), cyclic ADPR (cADPR) and nicotinamide; NAD(+) cleavage promoting cytoskeletal degradation and axon destruction. Also able to hydrolyze NADP(+), but not other NAD(+)-related molecules. Can activate neuronal cell death in response to stress. Regulates dendritic arborization through the MAPK4-JNK pathway. Involved in innate immune response: inhibits both TICAM1/TRIF- and MYD88-dependent activation of JUN/AP-1, TRIF-dependent activation of NF-kappa-B and IRF3, and the phosphorylation of MAPK14/p38. The sequence is that of NAD(+) hydrolase SARM1 from Homo sapiens (Human).